The chain runs to 877 residues: MCDLRRPAAGGMMDLAYVCEWEKWSKSTHCPSVPLACAWSCRNLIAFTMDLRSDDQDLTRMIHILDTEHPWDLHSIPSEHHEAITCLEWDQSGSRLLSADADGQIKCWSMADHLANSWESSVGSLVEGDPIVALSWLHNGVKLALHVEKSGASSFGEKFSRVKFSPSLTLFGGKPMEGWIAVTVSGLVTVSLLKPSGQVLTSTESLCRLRGRVALADIAFTGGGNIVVATADGSSASPVQFYKVCVSVVSEKCRIDTEILPSLFMRCTTDLNRKDKFPAITHLKFLARDMSEQVLLCASSQTSSIVECWSLRKEGLPVNNIFQQISPVVGDKQPTILKWRILSATNDLDRVSAVALPKLPISLTNTDLKVASDTQFYPGLGLALAFHDGSVHIVHRLSLQTMAVFYSSAAPRPVDEPAMKRPRTAGPAVHLKAMQLSWTSLALVGIDSHGKLSVLRLSPSMGHPLEVGLALRHLLFLLEYCMVTGYDWWDILLHVQPSMVQSLVEKLHEEYTRQTAALQQVLSTRILAMKASLCKLSPCTVTRVCDYHTKLFLIAISSTLKSLLRPHFLNTPDKSPGDRLTEICTKITDVDIDKVMINLKTEEFVLDMNTLQALQQLLQWVGDFVLYLLASLPNQGSLLRPGHSFLRDGTSLGMLRELMVVIRIWGLLKPSCLPVYTATSDTQDSMSLLFRLLTKLWICCRDEGPASEPDEALVDECCLLPSQLLIPSLDWLPASDGLVSRLQPKQPLRLQFGRAPTLPGSAATLQLDGLARAPGQPKIDHLRRLHLGACPTEECKACTRCGCVTMLKSPNRTTAVKQWEQRWIKNCLAVEGRGPDACVTSRASEEAPAFVQLGPQSTHHSPRTPRSLDHLHPEDRP.

9 WD repeats span residues 21–71 (WEKW…EHPW), 72–119 (DLHS…NSWE), 120–165 (SSVG…VKFS), 166–203 (PSLT…LTST), 204–257 (ESLC…RIDT), 258–334 (EILP…DKQP), 335–415 (TILK…RPVD), 416–460 (EPAM…LSPS), and 461–495 (MGHP…LLHV). Positions 848-877 (PAFVQLGPQSTHHSPRTPRSLDHLHPEDRP) are disordered. The span at 866-877 (RSLDHLHPEDRP) shows a compositional bias: basic and acidic residues.

The protein belongs to the Mediator complex subunit 16 family. Component of the Mediator complex, which is composed of MED1, MED4, MED6, MED7, MED8, MED9, MED10, MED11, MED12, MED13, MED13L, MED14, MED15, MED16, MED17, MED18, MED19, MED20, MED21, MED22, MED23, MED24, MED25, MED26, MED27, MED29, MED30, MED31, CCNC, CDK8 and CDC2L6/CDK11. The MED12, MED13, CCNC and CDK8 subunits form a distinct module termed the CDK8 module. Mediator containing the CDK8 module is less active than Mediator lacking this module in supporting transcriptional activation. Individual preparations of the Mediator complex lacking one or more distinct subunits have been variously termed ARC, CRSP, DRIP, PC2, SMCC and TRAP.

It is found in the nucleus. Component of the Mediator complex, a coactivator involved in the regulated transcription of nearly all RNA polymerase II-dependent genes. Mediator functions as a bridge to convey information from gene-specific regulatory proteins to the basal RNA polymerase II transcription machinery. Mediator is recruited to promoters by direct interactions with regulatory proteins and serves as a scaffold for the assembly of a functional preinitiation complex with RNA polymerase II and the general transcription factors. The polypeptide is Mediator of RNA polymerase II transcription subunit 16 (MED16) (Homo sapiens (Human)).